A 732-amino-acid chain; its full sequence is Inducible ornithine decarboxylase (732 aa).

At K355 the chain carries N6-(pyridoxal phosphate)lysine.

This sequence belongs to the Orn/Lys/Arg decarboxylase class-I family. Requires pyridoxal 5'-phosphate as cofactor.

It carries out the reaction L-ornithine + H(+) = putrescine + CO2. The protein operates within amine and polyamine biosynthesis; putrescine biosynthesis via L-ornithine pathway; putrescine from L-ornithine: step 1/1. Its function is as follows. The first enzyme leading to putrescine and thus polyamine synthesis. The polypeptide is Inducible ornithine decarboxylase (Escherichia coli (strain K12)).